A 147-amino-acid polypeptide reads, in one-letter code: Protegrin-2 (147 aa).

A signal peptide spans methionine 1–alanine 29. The propeptide occupies glutamine 30–valine 130. The disordered stretch occupies residues aspartate 61 to valine 80. 4 disulfide bridges follow: cysteine 85–cysteine 96, cysteine 107–cysteine 124, cysteine 136–cysteine 145, and cysteine 138–cysteine 143. Valine 146 is subject to Valine amide.

It belongs to the cathelicidin family.

The protein resides in the secreted. In terms of biological role, microbicidal activity. Active against E.coli, Listeria monocytogenes and C.albicans, in vitro. This chain is Protegrin-2 (NPG2), found in Sus scrofa (Pig).